Consider the following 377-residue polypeptide: [2-(trimethylamino)ethyl]phosphonate dioxygenase (377 aa).

The interval 95–119 (DTDQSSEVGRTSPDVETWDSSQPAP) is disordered. Asn-187 contacts [2-(trimethylamino)ethyl]phosphonate. His-198 contributes to the 2-oxoglutarate binding site. Positions 198 and 200 each coordinate Fe(2+). Positions 200, 201, 203, 286, and 288 each coordinate [2-(trimethylamino)ethyl]phosphonate. 2-oxoglutarate contacts are provided by His-341, Arg-343, and Arg-352. A Fe(2+)-binding site is contributed by His-341.

Belongs to the gamma-BBH/TMLD family. As to quaternary structure, homodimer. Requires Fe(2+) as cofactor. L-ascorbate serves as cofactor.

It carries out the reaction [2-(trimethylamino)ethyl]phosphonate + 2-oxoglutarate + O2 = [(1R)-1-hydroxy-2-(trimethylamino)ethyl]phosphonate + succinate + CO2. In terms of biological role, involved in the degradation of the naturally occurring organophosphonate 2-(trimethylammonio)ethylphosphonate (TMAEP). Catalyzes the hydroxylation of TMAEP to (R)-1-hydroxy-2-(trimethylammonio)ethylphosphonate (OH-TMAEP). Is highly specific for its N-trimethylated substrate. Cannot use gamma-butyrobetaine as substrate. This Leisingera caerulea (Phaeobacter caeruleus) protein is [2-(trimethylamino)ethyl]phosphonate dioxygenase.